Here is a 396-residue protein sequence, read N- to C-terminus: Growth-regulating factor 1 (396 aa).

Residues 18–53 (PFTASQWQELEHQALIYKYMASGTPIPSDLILPLRR) enclose the QLQ domain. 2 short sequence motifs (bipartite nuclear localization signal) span residues 86–105 (RKAE…KKWR) and 123–130 (RGKNRSRK). A WRC domain is found at 90–134 (DPEPGRCRRTDGKKWRCSKEAYPDSKYCEKHMHRGKNRSRKPVEM). A disordered region spans residues 117–176 (CEKHMHRGKNRSRKPVEMSLATPPPPSSSATSAASNSSAGVAPTTTTTSSPAPSYSRPAP). Residues 120–129 (HMHRGKNRSR) are compositionally biased toward basic residues. Low complexity predominate over residues 144-174 (SSATSAASNSSAGVAPTTTTTSSPAPSYSRP).

The protein belongs to the GRF family. In terms of tissue distribution, highly expressed in the intercalary meristem of the internode and in the shoot apex. Detected in the leaf primordia and emerging leaves in the uppermost node. Preferentially localized in the epidermis and in the tissues surrounding vascular bundles of the intercalary meristem of the internode and in adventitious roots of the second highest node. Low expression in the coleoptile and in the youngest leaf.

Its subcellular location is the nucleus. Transcription activator that plays a regulatory role in gibberellin-induced stem elongation. In Oryza sativa subsp. indica (Rice), this protein is Growth-regulating factor 1 (GRF1).